The primary structure comprises 426 residues: Coiled-coil domain-containing protein 86 (426 aa).

A disordered region spans residues 1–426; that stretch reads MDTPLRRSRR…QPPQRPVAKV (426 aa). Phosphoserine is present on Ser-18. The span at 33–49 shows a compositional bias: basic and acidic residues; the sequence is ALVDFKSNSEETGELKS. Positions 55–145 are enriched in pro residues; it reads LSLPSPGPQP…SLPSPGPQPE (91 aa). Position 59 is a phosphoserine (Ser-59). A Phosphothreonine modification is found at Thr-66. Phosphoserine occurs at positions 67, 70, 161, 172, 183, 191, 194, 225, 252, 253, and 283. A compositionally biased stretch (polar residues) spans 241 to 255; that stretch reads QPAQELTVQAPSSPE. Residues 304–320 are compositionally biased toward basic residues; the sequence is GKPKSGRVWKDRSKKRF. A compositionally biased stretch (basic and acidic residues) spans 339–383; sequence ERQERKLAKDFARHLEEEKQRRRQEKKERRAENLRRRLENERKAE. A coiled-coil region spans residues 346–389; the sequence is AKDFARHLEEEKQRRRQEKKERRAENLRRRLENERKAEIVQVIR. Over residues 392–402 the composition is skewed to basic residues; the sequence is AKLKKAKKKQL. Arg-408 is subject to Citrulline.

Citrullinated by PADI4. In terms of tissue distribution, highly expressed in testis. Also expressed in heart, liver, kidney.

The protein resides in the nucleus. It is found in the chromosome. Its subcellular location is the nucleolus. Its function is as follows. Required for proper chromosome segregation during mitosis and error-free mitotic progression. The chain is Coiled-coil domain-containing protein 86 from Mus musculus (Mouse).